A 306-amino-acid chain; its full sequence is Probable dimethyladenosine transferase (306 aa).

6 residues coordinate S-adenosyl-L-methionine: histidine 30, leucine 32, glycine 57, glutamate 78, aspartate 106, and asparagine 121.

It belongs to the class I-like SAM-binding methyltransferase superfamily. rRNA adenine N(6)-methyltransferase family. In terms of assembly, part of the small subunit (SSU) processome, composed of more than 70 proteins and the RNA chaperone small nucleolar RNA (snoRNA) U3.

It localises to the nucleus. The protein localises to the nucleolus. It carries out the reaction adenosine(1779)/adenosine(1780) in 18S rRNA + 4 S-adenosyl-L-methionine = N(6)-dimethyladenosine(1779)/N(6)-dimethyladenosine(1780) in 18S rRNA + 4 S-adenosyl-L-homocysteine + 4 H(+). Specifically dimethylates two adjacent adenosines in the loop of a conserved hairpin near the 3'-end of 18S rRNA in the 40S particle. Involved in the pre-rRNA processing steps leading to small-subunit rRNA production independently of its RNA-modifying catalytic activity. Part of the small subunit (SSU) processome, first precursor of the small eukaryotic ribosomal subunit. During the assembly of the SSU processome in the nucleolus, many ribosome biogenesis factors, an RNA chaperone and ribosomal proteins associate with the nascent pre-rRNA and work in concert to generate RNA folding, modifications, rearrangements and cleavage as well as targeted degradation of pre-ribosomal RNA by the RNA exosome. This Drosophila melanogaster (Fruit fly) protein is Probable dimethyladenosine transferase.